The sequence spans 188 residues: dCTP deaminase (188 aa).

Residues 111 to 116 (KSTYAR), 135 to 137 (TLE), Gln-156, Tyr-170, and Gln-180 each bind dCTP. Catalysis depends on Glu-137, which acts as the Proton donor/acceptor.

Belongs to the dCTP deaminase family. In terms of assembly, homotrimer.

The enzyme catalyses dCTP + H2O + H(+) = dUTP + NH4(+). It participates in pyrimidine metabolism; dUMP biosynthesis; dUMP from dCTP (dUTP route): step 1/2. In terms of biological role, catalyzes the deamination of dCTP to dUTP. The sequence is that of dCTP deaminase from Nitrosococcus oceani (strain ATCC 19707 / BCRC 17464 / JCM 30415 / NCIMB 11848 / C-107).